The following is a 281-amino-acid chain: Undecaprenyl-diphosphatase (281 aa).

Transmembrane regions (helical) follow at residues 4 to 24 (IEIL…WLPI), 45 to 65 (AFMS…VMVI), 89 to 109 (WLKV…DDWF), 113 to 133 (FHNM…FIYL), 152 to 172 (LPYT…LPGT), 190 to 210 (SVVT…ASAL), 225 to 245 (GQLF…MVAI), and 257 to 277 (FTLF…YSFV).

This sequence belongs to the UppP family.

Its subcellular location is the cell membrane. It carries out the reaction di-trans,octa-cis-undecaprenyl diphosphate + H2O = di-trans,octa-cis-undecaprenyl phosphate + phosphate + H(+). Its function is as follows. Catalyzes the dephosphorylation of undecaprenyl diphosphate (UPP). Confers resistance to bacitracin. This chain is Undecaprenyl-diphosphatase, found in Streptococcus pneumoniae (strain Hungary19A-6).